The following is a 483-amino-acid chain: GTPase Obg (483 aa).

In terms of domain architecture, Obg spans 2 to 159 (SRFIDRVVLH…RDLVLELKSV (158 aa)). Residues 160–340 (ADVGLLGFPS…LTFALAKMVR (181 aa)) enclose the OBG-type G domain. Residues 166–173 (GFPSAGKS), 191–195 (FTTLV), 212–215 (DVPG), 292–295 (NKTD), and 321–323 (SAV) contribute to the GTP site. Positions 173 and 193 each coordinate Mg(2+). The OCT domain maps to 358–438 (PVKVKDSSFT…IGDVSFEWEP (81 aa)).

It belongs to the TRAFAC class OBG-HflX-like GTPase superfamily. OBG GTPase family. Monomer. Requires Mg(2+) as cofactor.

It localises to the cytoplasm. An essential GTPase which binds GTP, GDP and possibly (p)ppGpp with moderate affinity, with high nucleotide exchange rates and a fairly low GTP hydrolysis rate. Plays a role in control of the cell cycle, stress response, ribosome biogenesis and in those bacteria that undergo differentiation, in morphogenesis control. This Rhodococcus erythropolis (strain PR4 / NBRC 100887) protein is GTPase Obg.